We begin with the raw amino-acid sequence, 163 residues long: Translation initiation factor IF-3-like (163 aa).

Belongs to the IF-3 family.

The sequence is that of Translation initiation factor IF-3-like from Nostoc sp. (strain PCC 7120 / SAG 25.82 / UTEX 2576).